The sequence spans 161 residues: Allophycocyanin beta chain (161 aa).

N71 is subject to N4-methylasparagine. C81 provides a ligand contact to (2R,3E)-phycocyanobilin.

It belongs to the phycobiliprotein family. Heterodimer of an alpha and a beta chain. Contains one covalently linked phycocyanobilin chromophore.

The protein localises to the plastid. Its subcellular location is the cyanelle thylakoid membrane. Functionally, light-harvesting photosynthetic bile pigment-protein from the phycobiliprotein complex. Allophycocyanin has a maximum absorption at approximately 650 nanometers. This chain is Allophycocyanin beta chain (apcB), found in Cyanophora paradoxa.